The chain runs to 1678 residues: Serine/threonine-protein kinase pakD (1678 aa).

The span at methionine 1–serine 15 shows a compositional bias: low complexity. 4 disordered regions span residues methionine 1–phenylalanine 73, asparagine 180–asparagine 224, glutamine 262–asparagine 428, and lysine 442–serine 489. Polar residues predominate over residues phenylalanine 17–glutamate 34. 2 stretches are compositionally biased toward low complexity: residues glutamine 35–phenylalanine 73 and asparagine 180–asparagine 214. The Calponin-homology (CH) domain maps to lysine 82 to asparagine 189. A compositionally biased stretch (polar residues) spans arginine 215–asparagine 224. 2 stretches are compositionally biased toward low complexity: residues asparagine 276–asparagine 359 and asparagine 399–asparagine 428. Positions aspartate 460–serine 472 are enriched in acidic residues. 2 coiled-coil regions span residues lysine 512–leucine 542 and threonine 570–threonine 628. Low complexity-rich tracts occupy residues serine 631–serine 654, asparagine 662–serine 671, and asparagine 695–serine 713. 2 disordered regions span residues serine 631 to arginine 672 and proline 693 to asparagine 722. Residues valine 752 to aspartate 862 adopt a coiled-coil conformation. Residues proline 1141–cysteine 1197 form a Phorbol-ester/DAG-type zinc finger. One can recognise a CRIB domain in the interval valine 1202 to glycine 1215. Disordered stretches follow at residues leucine 1267–glutamine 1292 and asparagine 1323–asparagine 1346. The stretch at asparagine 1269–isoleucine 1309 forms a coiled coil. Residues tyrosine 1376–leucine 1647 form the Protein kinase domain. ATP is bound by residues valine 1382–valine 1390 and lysine 1405. Residue aspartate 1515 is the Proton acceptor of the active site.

Belongs to the protein kinase superfamily. STE Ser/Thr protein kinase family. STE20 subfamily. It depends on Mg(2+) as a cofactor.

It carries out the reaction L-seryl-[protein] + ATP = O-phospho-L-seryl-[protein] + ADP + H(+). It catalyses the reaction L-threonyl-[protein] + ATP = O-phospho-L-threonyl-[protein] + ADP + H(+). This Dictyostelium discoideum (Social amoeba) protein is Serine/threonine-protein kinase pakD.